Here is a 382-residue protein sequence, read N- to C-terminus: MSLKEKTQSLFANAFGYPATHTIQAPGRVNLIGEHTDYNDGFVLPCAIDYQTVISCAPRDDHKVRVMAADYENQLDEFSLDAPIVAHENYQWANYVRGVVKHLQLRNNSFGGVDMVISGNVPQGAGLSSSASLEVAVGTVLQQLYHLPLDGAQIALNGQEAENQFVGCNCGIMDQLISALGKKDHALLIDCRSLGTKAVSMPKGVAVVIINSNFKRTLVGSEYNTRREQCETGARFFQQPALRDVTIEEFNAVAHELDPIVAKRVRHILTENARTVEAASALEQGDLKRMGELMAESHASMRDDFEITVPQIDTLVEIVKAVIGDKGGVRMTGGGFGGCIVALIPEELVPAVQQAVAEQYEAKTGIKETFYVCKPSQGAGQC.

Residue 34–37 (EHTD) participates in substrate binding. An ATP-binding site is contributed by 124 to 130 (GAGLSSS). Mg(2+)-binding residues include S130 and E162. D174 serves as the catalytic Proton acceptor. Position 223 (Y223) interacts with substrate.

The protein belongs to the GHMP kinase family. GalK subfamily.

The protein resides in the cytoplasm. The catalysed reaction is alpha-D-galactose + ATP = alpha-D-galactose 1-phosphate + ADP + H(+). The protein operates within carbohydrate metabolism; galactose metabolism. Its function is as follows. Catalyzes the transfer of the gamma-phosphate of ATP to D-galactose to form alpha-D-galactose-1-phosphate (Gal-1-P). The polypeptide is Galactokinase (Escherichia coli O17:K52:H18 (strain UMN026 / ExPEC)).